A 226-amino-acid polypeptide reads, in one-letter code: Glutathione S-transferase kappa 1 (226 aa).

16–18 (SPY) is a glutathione binding site. Lysine 49 carries the post-translational modification N6-succinyllysine. Asparagine 53 is a glutathione binding site. N6-acetyllysine occurs at positions 71 and 85. Lysine 116 is subject to N6-acetyllysine; alternate. Lysine 116 carries the post-translational modification N6-succinyllysine; alternate. At lysine 144 the chain carries N6-succinyllysine. Lysine 158 bears the N6-acetyllysine; alternate mark. Lysine 158 bears the N6-succinyllysine; alternate mark. 2 positions are modified to N6-acetyllysine: lysine 165 and lysine 169. Residues leucine 183 and 200 to 201 (SD) each bind glutathione.

It belongs to the GST superfamily. Kappa family. In terms of assembly, homodimer. Ubiquitous.

The protein localises to the peroxisome. The catalysed reaction is RX + glutathione = an S-substituted glutathione + a halide anion + H(+). Glutathione S-transferase that catalyzes the conjugation of glutathione to exogenous and endogenous compounds. Significant glutathione conjugating activity is found only with the model substrate, 1-chloro-2,4-dinitrobenzene (CDNB). This Homo sapiens (Human) protein is Glutathione S-transferase kappa 1 (GSTK1).